Reading from the N-terminus, the 524-residue chain is Probable cytochrome P450 519C1 (524 aa).

The helical transmembrane segment at 1–21 threads the bilayer; that stretch reads MNILLLIFYFLVCFLIFDFIK. Cys470 is a binding site for heme.

The protein belongs to the cytochrome P450 family. It depends on heme as a cofactor.

It is found in the membrane. This chain is Probable cytochrome P450 519C1 (cyp519C1), found in Dictyostelium discoideum (Social amoeba).